The primary structure comprises 1278 residues: SMC5-SMC6 complex localization factor protein 2 (1278 aa).

4 disordered regions span residues 1-235 (MTRR…LGAR), 248-337 (EQKK…KRTE), 443-491 (RINS…FIRH), and 509-582 (EPED…KETK). Positions 39 to 50 (KRTESPGDRKQS) are enriched in basic and acidic residues. The segment covering 94–103 (SSPKKLKPKR) has biased composition (basic residues). Basic and acidic residues-rich tracts occupy residues 118 to 133 (GGKE…ESRR), 156 to 174 (LPKE…ERRK), 180 to 199 (ESNR…DSRK), and 248 to 258 (EQKKLRKEQME). Polar residues-rich tracts occupy residues 259-277 (QRIN…SLKS) and 318-329 (SDSWELSGSKQN). 2 stretches are compositionally biased toward basic and acidic residues: residues 449–463 (KEQR…KSTK) and 469–489 (KARE…EKFI). A compositionally biased stretch (polar residues) spans 519–540 (ADSAPSNAGHHSSRNSDQVHSA). At Ser591 the chain carries Phosphoserine. Disordered stretches follow at residues 598-724 (PLNA…EEEE), 739-764 (RTPT…MKEY), and 798-820 (IRQG…DDGD). Basic and acidic residues predominate over residues 609 to 630 (PKKDKERSSSKERSGHSTESSK). Low complexity-rich tracts occupy residues 643 to 654 (SNESSGKNSGGS), 666 to 675 (PPAALEVVPS), and 688 to 697 (SGNSNAGSNA). Residues 707–724 (DSDEESLGYTLESDEEEE) show a composition bias toward acidic residues. Residues Ser708, Ser712, and Ser719 each carry the phosphoserine modification. Residues 740–1278 (TPTTSGKPPA…QLHDFWVPDS (539 aa)) are interaction with SIMC1. The segment at 769-1271 (TYTNTLERLV…NCRPTQGQLH (503 aa)) is NSE6-like domain. Residues 807-1278 (PLRTGDQDST…QLHDFWVPDS (472 aa)) form a required for interaction with SLF1 and RAD18 region.

It belongs to the FAM178 family. As to quaternary structure, forms a heterodimer with SIMC1. Interacts with SLF1 (via N-terminus); this interaction links RAD18 to the SMC5-SMC6 complex. Interacts with RAD18; this interaction is increased in a SLF1-dependent manner. Interacts with SMC5 and SMC6.

It localises to the nucleus. The protein resides in the PML body. Plays a role in the DNA damage response (DDR) pathway by regulating postreplication repair of UV-damaged DNA and genomic stability maintenance. The SLF1-SLF2 complex acts to link RAD18 with the SMC5-SMC6 complex at replication-coupled interstrand cross-links (ICL) and DNA double-strand breaks (DSBs) sites on chromatin during DNA repair in response to stalled replication forks. Promotes the recruitment of the SMC5-SMC6 complex to DNA lesions. May play a role in SMC5-SMC6 complex recruitment for viral restriction. Forms a complex with SIMC1 and this complex is required to recruit SMC5-SMC6 complex to PML nuclear bodies and sites of viral replication. This is SMC5-SMC6 complex localization factor protein 2 from Mus musculus (Mouse).